Reading from the N-terminus, the 178-residue chain is Fatty-acid and retinol-binding protein 1 (178 aa).

A signal peptide spans 1–16; it reads MYHQLILLALIGTIMA. Coiled-coil stretches lie at residues 67–89 and 129–154; these read DAAL…ELRN and IKQA…LKVT.

This sequence belongs to the fatty-acid and retinol-binding protein (FARBP) family. Not glycosylated.

It is found in the secreted. In terms of biological role, binds retinol and different fatty acids. In Loa loa (Eye worm), this protein is Fatty-acid and retinol-binding protein 1.